The primary structure comprises 204 residues: Crossover junction endodeoxyribonuclease RuvC (204 aa).

Catalysis depends on residues D7, E68, and D141. Mg(2+) contacts are provided by D7, E68, and D141.

This sequence belongs to the RuvC family. As to quaternary structure, homodimer which binds Holliday junction (HJ) DNA. The HJ becomes 2-fold symmetrical on binding to RuvC with unstacked arms; it has a different conformation from HJ DNA in complex with RuvA. In the full resolvosome a probable DNA-RuvA(4)-RuvB(12)-RuvC(2) complex forms which resolves the HJ. It depends on Mg(2+) as a cofactor.

The protein localises to the cytoplasm. The enzyme catalyses Endonucleolytic cleavage at a junction such as a reciprocal single-stranded crossover between two homologous DNA duplexes (Holliday junction).. Functionally, the RuvA-RuvB-RuvC complex processes Holliday junction (HJ) DNA during genetic recombination and DNA repair. Endonuclease that resolves HJ intermediates. Cleaves cruciform DNA by making single-stranded nicks across the HJ at symmetrical positions within the homologous arms, yielding a 5'-phosphate and a 3'-hydroxyl group; requires a central core of homology in the junction. The consensus cleavage sequence is 5'-(A/T)TT(C/G)-3'. Cleavage occurs on the 3'-side of the TT dinucleotide at the point of strand exchange. HJ branch migration catalyzed by RuvA-RuvB allows RuvC to scan DNA until it finds its consensus sequence, where it cleaves and resolves the cruciform DNA. This Clavibacter sepedonicus (Clavibacter michiganensis subsp. sepedonicus) protein is Crossover junction endodeoxyribonuclease RuvC.